The following is a 344-amino-acid chain: RNA 3'-terminal phosphate cyclase (344 aa).

ATP is bound by residues glutamine 103 and 283-287; that span reads HLADQ. The active-site Tele-AMP-histidine intermediate is histidine 308.

Belongs to the RNA 3'-terminal cyclase family. Type 1 subfamily.

It is found in the cytoplasm. It catalyses the reaction a 3'-end 3'-phospho-ribonucleotide-RNA + ATP = a 3'-end 2',3'-cyclophospho-ribonucleotide-RNA + AMP + diphosphate. Catalyzes the conversion of 3'-phosphate to a 2',3'-cyclic phosphodiester at the end of RNA. The mechanism of action of the enzyme occurs in 3 steps: (A) adenylation of the enzyme by ATP; (B) transfer of adenylate to an RNA-N3'P to produce RNA-N3'PP5'A; (C) and attack of the adjacent 2'-hydroxyl on the 3'-phosphorus in the diester linkage to produce the cyclic end product. The biological role of this enzyme is unknown but it is likely to function in some aspects of cellular RNA processing. The protein is RNA 3'-terminal phosphate cyclase of Salmonella agona (strain SL483).